Consider the following 298-residue polypeptide: Mitochondrial glycine transporter (298 aa).

Solcar repeat units lie at residues 5-84, 105-189, and 211-295; these read TKTR…MRTA, LTTY…AKEV, and TSTL…LIKL. The next 6 membrane-spanning stretches (helical) occupy residues 11 to 36, 59 to 85, 111 to 136, 164 to 187, 215 to 241, and 270 to 288; these read LIGG…TRIQ, GTLP…RTAI, LISG…VRYE, GFGP…EKAK, VNST…KTRM, and GLSM…AWGI.

The protein belongs to the mitochondrial carrier (TC 2.A.29) family. SLC25A38 subfamily.

The protein localises to the mitochondrion inner membrane. The enzyme catalyses glycine(in) = glycine(out). In terms of biological role, mitochondrial glycine transporter that imports glycine into the mitochondrial matrix. Plays an important role in providing glycine for the first enzymatic step in heme biosynthesis, the condensation of glycine with succinyl-CoA to produce 5-aminolevulinate (ALA) in the mitochondrial matrix. The chain is Mitochondrial glycine transporter from Vanderwaltozyma polyspora (strain ATCC 22028 / DSM 70294 / BCRC 21397 / CBS 2163 / NBRC 10782 / NRRL Y-8283 / UCD 57-17) (Kluyveromyces polysporus).